Consider the following 61-residue polypeptide: Alpha-conotoxine-like Am1.4 (61 aa).

An N-terminal signal peptide occupies residues 1–21; it reads MGMRMMFTVFLLVVLATTVVS. Residues 22 to 44 constitute a propeptide that is removed on maturation; sequence FMSGRASHGRNAAASDLIALTIK.

Belongs to the conotoxin A superfamily. Post-translationally, is not hydroxylated. In terms of processing, contains 2 disulfide bonds. Expressed by the venom duct.

It is found in the secreted. Alpha-conotoxins act on postsynaptic membranes, they bind to the nicotinic acetylcholine receptors (nAChR) and thus inhibit them. This Conus amadis (Amadis cone) protein is Alpha-conotoxine-like Am1.4.